The following is a 180-amino-acid chain: Bifunctional protein PyrR (180 aa).

Residues L101–T113 carry the PRPP-binding motif.

It belongs to the purine/pyrimidine phosphoribosyltransferase family. PyrR subfamily. In terms of assembly, homodimer and homohexamer; in equilibrium.

It carries out the reaction UMP + diphosphate = 5-phospho-alpha-D-ribose 1-diphosphate + uracil. Regulates transcriptional attenuation of the pyrimidine nucleotide (pyr) operon by binding in a uridine-dependent manner to specific sites on pyr mRNA. This disrupts an antiterminator hairpin in the RNA and favors formation of a downstream transcription terminator, leading to a reduced expression of downstream genes. Functionally, also displays a weak uracil phosphoribosyltransferase activity which is not physiologically significant. This Bacillus pumilus (strain SAFR-032) protein is Bifunctional protein PyrR.